The chain runs to 456 residues: Argininosuccinate lyase (456 aa).

The protein belongs to the lyase 1 family. Argininosuccinate lyase subfamily.

It is found in the cytoplasm. The catalysed reaction is 2-(N(omega)-L-arginino)succinate = fumarate + L-arginine. It participates in amino-acid biosynthesis; L-arginine biosynthesis; L-arginine from L-ornithine and carbamoyl phosphate: step 3/3. The protein is Argininosuccinate lyase of Shewanella amazonensis (strain ATCC BAA-1098 / SB2B).